A 604-amino-acid polypeptide reads, in one-letter code: uncharacterized protein (604 aa).

Residues 49 to 332 enclose the ABC transmembrane type-1 domain; sequence LILVMLMVVI…LANQFNTMLS (284 aa). The next 4 membrane-spanning stretches (helical) occupy residues 50–70, 86–106, 172–192, and 288–308; these read ILVM…PFVI, LIPV…SLWF, VITF…LTLI, and IAAI…SIVV. Residues 366 to 600 form the ABC transporter domain; sequence IEFRDVSFGY…KGFYSDLYES (235 aa). Position 399 to 406 (399 to 406) interacts with ATP; it reads GPTGAGKT. Residues 510-530 traverse the membrane as a helical segment; it reads LISIARAVLADPVLLILDEAT.

This sequence belongs to the ABC transporter superfamily.

It localises to the cell membrane. This is an uncharacterized protein from Bacillus subtilis (strain 168).